Reading from the N-terminus, the 356-residue chain is Inositol phosphoceramide mannosyltransferase 3 (356 aa).

A helical transmembrane segment spans residues 4–24 (ILFYFFFFLTLILSATVYLFG). Asn52 and Asn146 each carry an N-linked (GlcNAc...) asparagine glycan. 2 helical membrane passes run 197–217 (FPYL…IWSA) and 269–289 (WAIF…FIFG). Phosphoserine is present on residues Ser307, Ser353, and Ser355.

This sequence belongs to the glycosyltransferase 32 family.

Its subcellular location is the endoplasmic reticulum membrane. It localises to the golgi apparatus. The protein localises to the cis-Golgi network membrane. It is found in the trans-Golgi network membrane. With imt1 and imt2, is required for the synthesis of mannosylinositol phosphoceramide (MIPC). Catalyzes the addition of mannosyl to inositol phosphoceramide (IPC). MIPC is essential for cell morphology, cell-surface distribution of ergosterol, localization for plasma-membrane transporters, and lipid-raft-mediated endocytosis of plasma membrane proteins to the vacuole. The protein is Inositol phosphoceramide mannosyltransferase 3 of Schizosaccharomyces pombe (strain 972 / ATCC 24843) (Fission yeast).